The chain runs to 706 residues: uncharacterized protein (706 aa).

Coiled coils occupy residues 86-162, 269-299, and 337-427; these read TKNV…AKKI, DYLKDVEKSIEQLSDNYEQYLSNIDIFVNEL, and DDYI…QSDY.

This is an uncharacterized protein from Staphylococcus aureus (strain MRSA252).